Here is a 549-residue protein sequence, read N- to C-terminus: Tigger transposable element-derived protein 7 (549 aa).

In terms of domain architecture, HTH psq-type spans 1–52 (MNKRGKYTTLNLEEKMKVLSRIEAGRSLKSVMDEFGISKSTFYDIKKNKKLI). 2 consecutive DNA-binding regions (H-T-H motif) follow at residues 28–48 (LKSV…IKKN) and 101–132 (VELQ…FRNR). The region spanning 68–139 (KRKRTTGAKY…RNRHAIGNRK (72 aa)) is the HTH CENPB-type domain. A DDE-1 domain is found at 169 to 399 (LCLAQLYSGD…VKQITIANAW (231 aa)). Residues 527 to 549 (FLKPRPHNIKDSFSGPSTSGSNH) are disordered. Residues 540-549 (SGPSTSGSNH) are compositionally biased toward polar residues.

It belongs to the tigger transposable element derived protein family. Expressed in all tissues tested. Higher expression in testis and ovary.

It localises to the nucleus. The polypeptide is Tigger transposable element-derived protein 7 (TIGD7) (Homo sapiens (Human)).